A 355-amino-acid polypeptide reads, in one-letter code: Sesquiterpene synthase MAJ_08936 (355 aa).

Mg(2+) contacts are provided by Asp91 and Asp96. Positions 91-96 (DDLFVD) match the DDXXXD motif motif. Arg184 contributes to the substrate binding site. 3 residues coordinate Mg(2+): Asn230, Ser234, and Glu238.

This sequence belongs to the terpene synthase family. Mg(2+) serves as cofactor.

The enzyme catalyses (2E,6E)-farnesyl diphosphate + H2O = (+)-corvol ether B + diphosphate. The catalysed reaction is (2E,6E)-farnesyl diphosphate + H2O = (+)-corvol ether A + diphosphate. Its function is as follows. Terpene synthase that catalyzes the conversion of (2E,6E)-farnesyl diphosphate (FPP) into sesquiterpenes which are important for fungi-environment interactions. Produces a mixture consisting of 8 sesquiterpenes including corvol ethers A and B, as well as traces of epizonarene, gamma-cadinene, delta-cadinene, alpha-cadinene, alpha-cadinol, and an unidentified sesquiterpene. The major product is corvol ether A. This chain is Sesquiterpene synthase MAJ_08936, found in Metarhizium majus (strain ARSEF 297).